The sequence spans 362 residues: Stress response regulator protein 1 (362 aa).

2 disordered regions span residues 1 to 39 (MTRLTRPMVRSPISLPSTPSQLLHSASLSSSPSSPSLVQ) and 163 to 188 (TLKSTVSTSTSTSTSTSTGTNTETKT). Over residues 19 to 39 (PSQLLHSASLSSSPSSPSLVQ) the composition is skewed to low complexity. A Response regulatory domain is found at 209–327 (KFLLVDDNLI…LDFMANVIDE (119 aa)). Asp-260 carries the 4-aspartylphosphate modification.

Functionally, required for stress adaptation, morphogenesis and virulence. In Lodderomyces elongisporus (strain ATCC 11503 / CBS 2605 / JCM 1781 / NBRC 1676 / NRRL YB-4239) (Yeast), this protein is Stress response regulator protein 1 (SRR1).